A 275-amino-acid polypeptide reads, in one-letter code: Large ribosomal subunit protein uL2c (275 aa).

A disordered region spans residues 28–53 (TPTKSLTHANHRARGRNHSGSITTRW).

This sequence belongs to the universal ribosomal protein uL2 family. Part of the 50S ribosomal subunit.

The protein localises to the plastid. It localises to the chloroplast. The sequence is that of Large ribosomal subunit protein uL2c (rpl2) from Nephroselmis olivacea (Green alga).